A 259-amino-acid polypeptide reads, in one-letter code: MDLVQIGSYTFSSRLILGTGKFGNTASMVDAVRASGTELVTVALRRFNREETDHDLFTTLADLDGITLMPNTSGASNAKEAVRAAHISRELSGSPFIKVEIHPNPQHLMPDPIETYEACKILAGEGFLVMPYIPADPVLAKRLEDVGCASVMPLGSSIGSGQGLATAGMIRLIIRESTIPVIVDAGLRSPSEACAAMEMGCTAVLVNSAIAVAQNPPEMAAAFAEAVQAGYRAKAAGIMPKSGSAIATSPLTSFLDTTS.

Residue Lys98 is the Schiff-base intermediate with DXP of the active site. 1-deoxy-D-xylulose 5-phosphate is bound by residues Gly159, 185–186 (AG), and 207–208 (NS).

Belongs to the ThiG family. In terms of assembly, homotetramer. Forms heterodimers with either ThiH or ThiS.

The protein localises to the cytoplasm. The enzyme catalyses [ThiS sulfur-carrier protein]-C-terminal-Gly-aminoethanethioate + 2-iminoacetate + 1-deoxy-D-xylulose 5-phosphate = [ThiS sulfur-carrier protein]-C-terminal Gly-Gly + 2-[(2R,5Z)-2-carboxy-4-methylthiazol-5(2H)-ylidene]ethyl phosphate + 2 H2O + H(+). Its pathway is cofactor biosynthesis; thiamine diphosphate biosynthesis. Catalyzes the rearrangement of 1-deoxy-D-xylulose 5-phosphate (DXP) to produce the thiazole phosphate moiety of thiamine. Sulfur is provided by the thiocarboxylate moiety of the carrier protein ThiS. In vitro, sulfur can be provided by H(2)S. The chain is Thiazole synthase from Chlorobium phaeobacteroides (strain BS1).